Here is a 290-residue protein sequence, read N- to C-terminus: Agroclavine dehydrogenase (290 aa).

This sequence belongs to the fgaFS/easG family. In terms of assembly, monomer.

It carries out the reaction agroclavine + NADP(+) = didehydroagroclavine + NADPH + H(+). Its pathway is alkaloid biosynthesis; ergot alkaloid biosynthesis. Functionally, agroclavine dehydrogenase; part of the gene cluster that mediates the biosynthesis of fungal ergot alkaloid. DmaW catalyzes the first step of ergot alkaloid biosynthesis by condensing dimethylallyl diphosphate (DMAP) and tryptophan to form 4-dimethylallyl-L-tryptophan. The second step is catalyzed by the methyltransferase easF that methylates 4-dimethylallyl-L-tryptophan in the presence of S-adenosyl-L-methionine, resulting in the formation of 4-dimethylallyl-L-abrine. The catalase easC and the FAD-dependent oxidoreductase easE then transform 4-dimethylallyl-L-abrine to chanoclavine-I which is further oxidized by easD in the presence of NAD(+), resulting in the formation of chanoclavine-I aldehyde. Agroclavine dehydrogenase easG then mediates the conversion of chanoclavine-I aldehyde to agroclavine via a non-enzymatic adduct reaction: the substrate is an iminium intermediate that is formed spontaneously from chanoclavine-I aldehyde in the presence of glutathione. The presence of easA is not required to complete this reaction. Further conversion of agroclavine to paspalic acid is a two-step process involving oxidation of agroclavine to elymoclavine and of elymoclavine to paspalic acid, the second step being performed by the elymoclavine oxidase cloA. Paspalic acid is then further converted to D-lysergic acid. Ergopeptines are assembled from D-lysergic acid and three different amino acids by the D-lysergyl-peptide-synthetases composed each of a monomudular and a trimodular nonribosomal peptide synthetase subunit. LpsB and lpsC encode the monomodular subunits responsible for D-lysergic acid activation and incorporation into the ergopeptine backbone. LpsA1 and A2 subunits encode the trimodular nonribosomal peptide synthetase assembling the tripeptide portion of ergopeptines. LpsA1 is responsible for formation of the major ergopeptine, ergotamine, and lpsA2 for alpha-ergocryptine, the minor ergopeptine of the total alkaloid mixture elaborated by C.purpurea. D-lysergyl-tripeptides are assembled by the nonribosomal peptide synthetases and released as N-(D-lysergyl-aminoacyl)-lactams. Cyclolization of the D-lysergyl-tripeptides is performed by the Fe(2+)/2-ketoglutarate-dependent dioxygenase easH which introduces a hydroxyl group into N-(D-lysergyl-aminoacyl)-lactam at alpha-C of the aminoacyl residue followed by spontaneous condensation with the terminal lactam carbonyl group. The polypeptide is Agroclavine dehydrogenase (Claviceps purpurea (strain 20.1) (Ergot fungus)).